A 239-amino-acid polypeptide reads, in one-letter code: Small ribosomal subunit protein uS3 (239 aa).

One can recognise a KH type-2 domain in the interval 39 to 109; sequence IRAMIQEIPE…KVQIKIKEVK (71 aa). The interval 219–239 is disordered; sequence GALLKKQRRPRTEKPAQAGRQ.

Belongs to the universal ribosomal protein uS3 family. In terms of assembly, part of the 30S ribosomal subunit. Forms a tight complex with proteins S10 and S14.

Its function is as follows. Binds the lower part of the 30S subunit head. Binds mRNA in the 70S ribosome, positioning it for translation. The sequence is that of Small ribosomal subunit protein uS3 from Treponema denticola (strain ATCC 35405 / DSM 14222 / CIP 103919 / JCM 8153 / KCTC 15104).